The chain runs to 208 residues: Thiamine-phosphate synthase (208 aa).

Residues Gln38–Lys42 and Asn70 contribute to the 4-amino-2-methyl-5-(diphosphooxymethyl)pyrimidine site. Asp71 and Asp90 together coordinate Mg(2+). Thr109 is a 4-amino-2-methyl-5-(diphosphooxymethyl)pyrimidine binding site. Ser136 to Thr138 lines the 2-[(2R,5Z)-2-carboxy-4-methylthiazol-5(2H)-ylidene]ethyl phosphate pocket. Lys139 provides a ligand contact to 4-amino-2-methyl-5-(diphosphooxymethyl)pyrimidine. Residues Gly166 and Val186–Ser187 each bind 2-[(2R,5Z)-2-carboxy-4-methylthiazol-5(2H)-ylidene]ethyl phosphate.

The protein belongs to the thiamine-phosphate synthase family. Requires Mg(2+) as cofactor.

The enzyme catalyses 2-[(2R,5Z)-2-carboxy-4-methylthiazol-5(2H)-ylidene]ethyl phosphate + 4-amino-2-methyl-5-(diphosphooxymethyl)pyrimidine + 2 H(+) = thiamine phosphate + CO2 + diphosphate. It catalyses the reaction 2-(2-carboxy-4-methylthiazol-5-yl)ethyl phosphate + 4-amino-2-methyl-5-(diphosphooxymethyl)pyrimidine + 2 H(+) = thiamine phosphate + CO2 + diphosphate. The catalysed reaction is 4-methyl-5-(2-phosphooxyethyl)-thiazole + 4-amino-2-methyl-5-(diphosphooxymethyl)pyrimidine + H(+) = thiamine phosphate + diphosphate. Its pathway is cofactor biosynthesis; thiamine diphosphate biosynthesis; thiamine phosphate from 4-amino-2-methyl-5-diphosphomethylpyrimidine and 4-methyl-5-(2-phosphoethyl)-thiazole: step 1/1. Its function is as follows. Condenses 4-methyl-5-(beta-hydroxyethyl)thiazole monophosphate (THZ-P) and 2-methyl-4-amino-5-hydroxymethyl pyrimidine pyrophosphate (HMP-PP) to form thiamine monophosphate (TMP). This Aromatoleum aromaticum (strain DSM 19018 / LMG 30748 / EbN1) (Azoarcus sp. (strain EbN1)) protein is Thiamine-phosphate synthase.